The sequence spans 66 residues: Large ribosomal subunit protein bL33c (66 aa).

This sequence belongs to the bacterial ribosomal protein bL33 family.

The protein localises to the plastid. It localises to the chloroplast. This is Large ribosomal subunit protein bL33c from Brachypodium distachyon (Purple false brome).